Here is a 462-residue protein sequence, read N- to C-terminus: Arginine biosynthesis bifunctional protein ArgJ, mitochondrial (462 aa).

Residues Thr200, Lys228, Thr239, Glu326, Asn457, and Thr462 each contribute to the substrate site. The active-site Nucleophile is the Thr239.

Belongs to the ArgJ family. In terms of assembly, heterodimer of an alpha and a beta chain. Post-translationally, the alpha and beta chains are autoproteolytically processed from a single precursor protein within the mitochondrion.

It is found in the mitochondrion matrix. It carries out the reaction N(2)-acetyl-L-ornithine + L-glutamate = N-acetyl-L-glutamate + L-ornithine. It catalyses the reaction L-glutamate + acetyl-CoA = N-acetyl-L-glutamate + CoA + H(+). The protein operates within amino-acid biosynthesis; L-arginine biosynthesis; L-ornithine and N-acetyl-L-glutamate from L-glutamate and N(2)-acetyl-L-ornithine (cyclic): step 1/1. It functions in the pathway amino-acid biosynthesis; L-arginine biosynthesis; N(2)-acetyl-L-ornithine from L-glutamate: step 1/4. In terms of biological role, catalyzes two activities which are involved in the cyclic version of arginine biosynthesis: the synthesis of acetylglutamate from glutamate and acetyl-CoA, and of ornithine by transacetylation between acetylornithine and glutamate. In Pyrenophora tritici-repentis (strain Pt-1C-BFP) (Wheat tan spot fungus), this protein is Arginine biosynthesis bifunctional protein ArgJ, mitochondrial.